A 604-amino-acid chain; its full sequence is Glutamine--fructose-6-phosphate aminotransferase [isomerizing] (604 aa).

Residue cysteine 2 is the Nucleophile; for GATase activity of the active site. Positions 2-216 (CGIVGYVGFR…DGDVVRLTRE (215 aa)) constitute a Glutamine amidotransferase type-2 domain. SIS domains are found at residues 281–420 (LALD…GRGA) and 453–594 (VAEK…VDQP). The For Fru-6P isomerization activity role is filled by lysine 599.

As to quaternary structure, homodimer.

Its subcellular location is the cytoplasm. It carries out the reaction D-fructose 6-phosphate + L-glutamine = D-glucosamine 6-phosphate + L-glutamate. Functionally, catalyzes the first step in hexosamine metabolism, converting fructose-6P into glucosamine-6P using glutamine as a nitrogen source. This is Glutamine--fructose-6-phosphate aminotransferase [isomerizing] from Thermus thermophilus (strain ATCC 27634 / DSM 579 / HB8).